We begin with the raw amino-acid sequence, 84 residues long: Putative membrane protein insertion efficiency factor (84 aa).

It belongs to the UPF0161 family.

It localises to the cell membrane. In terms of biological role, could be involved in insertion of integral membrane proteins into the membrane. In Staphylococcus carnosus (strain TM300), this protein is Putative membrane protein insertion efficiency factor.